The sequence spans 210 residues: Orotate phosphoribosyltransferase (210 aa).

Residues arginine 94, lysine 98, histidine 100, and 120–128 contribute to the 5-phospho-alpha-D-ribose 1-diphosphate site; that span reads EDLISTGGS. Serine 124 serves as a coordination point for orotate.

This sequence belongs to the purine/pyrimidine phosphoribosyltransferase family. PyrE subfamily. As to quaternary structure, homodimer. It depends on Mg(2+) as a cofactor.

It carries out the reaction orotidine 5'-phosphate + diphosphate = orotate + 5-phospho-alpha-D-ribose 1-diphosphate. It participates in pyrimidine metabolism; UMP biosynthesis via de novo pathway; UMP from orotate: step 1/2. Catalyzes the transfer of a ribosyl phosphate group from 5-phosphoribose 1-diphosphate to orotate, leading to the formation of orotidine monophosphate (OMP). In Halalkalibacterium halodurans (strain ATCC BAA-125 / DSM 18197 / FERM 7344 / JCM 9153 / C-125) (Bacillus halodurans), this protein is Orotate phosphoribosyltransferase.